The sequence spans 576 residues: Homeobox protein invected (576 aa).

5 disordered regions span residues 1-68, 80-102, 305-344, 364-410, and 426-476; these read MSTL…DEQT, EVEE…NSVL, GGSV…LAQS, NSND…GEDS, and SDRP…RPRT. Over residues 80–91 the composition is skewed to acidic residues; it reads EVEEEHDLDLED. Low complexity-rich tracts occupy residues 309–325, 364–381, and 395–405; these read SGSS…TNGN, NSND…TNTS, and AGAGATGASGK. Gly residues predominate over residues 450-468; it reads AGGGGGGVEKGEAADGGGV. Positions 471-530 form a DNA-binding region, homeobox; that stretch reads DKRPRTAFSGTQLARLKHEFNENRYLTEKRRQQLSGELGLNEAQIKIWFQNKRAKLKKSS.

It belongs to the engrailed homeobox family. Expressed in row 6/7 of the embryonic neuroectoderm.

It is found in the nucleus. In terms of biological role, engrailed (en) and invected (inv) are functionally redundant transcription factors in neuronal precursor cell NB5-3 specification. Inv is unable to substitute for en in other regulatory processes such as maintaining gsb expression in the neuroectoderm after stage 10 of embryogenesis. Maintenance of gsb expression in row 5 of the neuroectoderm involves an as yet unidentified short range signaling molecule. This Drosophila melanogaster (Fruit fly) protein is Homeobox protein invected (inv).